The chain runs to 256 residues: Pimeloyl-[acyl-carrier protein] methyl ester esterase (256 aa).

Residues 15-242 enclose the AB hydrolase-1 domain; that stretch reads HLVLLHGWGL…AAHAPFISHP (228 aa). Substrate is bound by residues Trp22, 82 to 83, and 143 to 147; these read SL and FLALQ. Ser82 serves as the catalytic Nucleophile. Residues Asp207 and His235 contribute to the active site. Residue His235 participates in substrate binding.

It belongs to the AB hydrolase superfamily. Carboxylesterase BioH family. As to quaternary structure, monomer.

It localises to the cytoplasm. It catalyses the reaction 6-carboxyhexanoyl-[ACP] methyl ester + H2O = 6-carboxyhexanoyl-[ACP] + methanol + H(+). Its pathway is cofactor biosynthesis; biotin biosynthesis. In terms of biological role, the physiological role of BioH is to remove the methyl group introduced by BioC when the pimeloyl moiety is complete. It allows to synthesize pimeloyl-ACP via the fatty acid synthetic pathway through the hydrolysis of the ester bonds of pimeloyl-ACP esters. The polypeptide is Pimeloyl-[acyl-carrier protein] methyl ester esterase (Salmonella choleraesuis (strain SC-B67)).